Reading from the N-terminus, the 63-residue chain is Sperm protamine P1 (63 aa).

Positions 1 to 63 are disordered; it reads MARYRRHSRS…RYSRRGRRRY (63 aa).

The protein belongs to the protamine P1 family. As to expression, testis.

Its subcellular location is the nucleus. The protein localises to the chromosome. Functionally, protamines substitute for histones in the chromatin of sperm during the haploid phase of spermatogenesis. They compact sperm DNA into a highly condensed, stable and inactive complex. The polypeptide is Sperm protamine P1 (PRM1) (Sminthopsis griseoventer (Gray-bellied dunnart)).